A 543-amino-acid polypeptide reads, in one-letter code: T-complex protein 1 subunit eta (543 aa).

M1 carries the post-translational modification N-acetylmethionine. ADP is bound at residue G41. Position 41 (G41) interacts with ATP. K67 is modified (N6-acetyllysine). D92 contributes to the Mg(2+) binding site. Residues G93, T94, T95, S96, S164, and S165 each coordinate ADP. G93 provides a ligand contact to ATP. Position 96 (S96) interacts with ATP. K250 and K320 each carry N6-acetyllysine. 2 residues coordinate ATP: R398 and G409. G409 provides a ligand contact to ADP. Residue K430 forms a Glycyl lysine isopeptide (Lys-Gly) (interchain with G-Cter in SUMO2) linkage. ADP is bound by residues E494 and R499. Residue R499 participates in ATP binding. An Omega-N-methylarginine modification is found at R535.

It belongs to the TCP-1 chaperonin family. As to quaternary structure, component of the chaperonin-containing T-complex (TRiC), a hexadecamer composed of two identical back-to-back stacked rings enclosing a protein folding chamber. Each ring is made up of eight different subunits: TCP1/CCT1, CCT2, CCT3, CCT4, CCT5, CCT6A/CCT6, CCT7, CCT8. Interacts with PACRG. Interacts with DLEC1.

The protein localises to the cytoplasm. The enzyme catalyses ATP + H2O = ADP + phosphate + H(+). Component of the chaperonin-containing T-complex (TRiC), a molecular chaperone complex that assists the folding of actin, tubulin and other proteins upon ATP hydrolysis. The TRiC complex mediates the folding of WRAP53/TCAB1, thereby regulating telomere maintenance. The protein is T-complex protein 1 subunit eta (CCT7) of Pongo abelii (Sumatran orangutan).